Reading from the N-terminus, the 41-residue chain is MEEQPECREEKRGSLHVWKSELVEVEDDVYLRHSSSLTYRL.

A loss of recognition by cytotoxic T lymphocyte (CTL) region spans residues 9–17 (EEKRGSLHV).

HB-1 forms a complex with MHC class I HLA-B44. As to expression, expressed in acute lymphoblastic leukemia B-cells and Epstein-Barr virus-transformed B-cells.

Its function is as follows. Precursor of the histocomplatibility antigen HB-1. More generally, minor histocomplatibility antigens (mHags) refer to immunogenic peptide which, when complexed with MHC, can generate an immune response after recognition by specific T-cells. The peptides are derived from polymorphic intracellular proteins, which are cleaved by normal pathways of antigen processing. The binding of these peptides to MHC class I or class II molecules and its expression on the cell surface can stimulate T-cell responses and thereby trigger graft rejection or graft-versus-host disease (GVHD) after hematopoietic stem cell transplantation from HLA-identical sibling donor. GVHD is a frequent complication after bone marrow transplantation (BMT), due to mismatch of minor histocomplatibility antigen in HLA-matched sibling marrow transplants. HB-1 is presented on the cell surface by MHC class I HLA-B44. This complex specifically elicits donor-cytotoxic T lymphocyte (CTL) reactivity in B-cell acute lymphoblastic leukemia (B-ALL) after treatment by HLA-identical allogenic bone marrow transplantation (BMT). It induces cell recognition and lysis by CTL. However, HB-1 restricted expression in B-ALL cells and not in normal tissues may allow a specific CTL reactivity against B-ALL without the risk of evoking graft-versus-host disease. This Homo sapiens (Human) protein is Minor histocompatibility protein HB-1 (HMHB1).